Consider the following 207-residue polypeptide: Succinyl-CoA:3-ketoacid coenzyme A transferase subunit B (207 aa).

E43 is a catalytic residue.

It belongs to the 3-oxoacid CoA-transferase subunit B family. Heterodimer of a subunit A and a subunit B.

The enzyme catalyses a 3-oxo acid + succinyl-CoA = a 3-oxoacyl-CoA + succinate. In Helicobacter pylori (strain ATCC 700392 / 26695) (Campylobacter pylori), this protein is Succinyl-CoA:3-ketoacid coenzyme A transferase subunit B (scoB).